The chain runs to 230 residues: Ubiquitin carboxyl-terminal hydrolase isozyme L3 (230 aa).

One can recognise a UCH catalytic domain in the interval 5 to 229; that stretch reads RWLPLEANPE…LRFNAIALSA (225 aa). Positions 8 to 13 are interaction with ubiquitin; that stretch reads PLEANP. Residue Cys95 is the Nucleophile of the active site. Ser130 bears the Phosphoserine mark. The tract at residues 152 to 159 is interaction with ubiquitin. Crossover loop which restricts access of large ubiquitin adducts to the active site; that stretch reads AHEGQTEA. His169 acts as the Proton donor in catalysis. Positions 219–224 are interaction with ubiquitin; that stretch reads ELRFNA.

The protein belongs to the peptidase C12 family. Preferentially binds diubiquitin; the interaction does not hydrolyze diubiquitin but, in vitro, inhibits the hydrolyzing activity on other substrates. In terms of tissue distribution, ubiquitously expressed, with highest levels in brain, liver, heart, thymus, kidney and testis. Highly expressed in the cauda epididymidis, in meiotic pachytene spermatocytes and post-meiotic spematids. In the retina, enriched in the photoreceptor inner segment.

The protein resides in the cytoplasm. It catalyses the reaction Thiol-dependent hydrolysis of ester, thioester, amide, peptide and isopeptide bonds formed by the C-terminal Gly of ubiquitin (a 76-residue protein attached to proteins as an intracellular targeting signal).. Its activity is regulated as follows. Inhibited by monoubiquitin and diubiquitin. In terms of biological role, deubiquitinating enzyme (DUB) that controls levels of cellular ubiquitin through processing of ubiquitin precursors and ubiquitinated proteins. Thiol protease that recognizes and hydrolyzes a peptide bond at the C-terminal glycine of either ubiquitin or NEDD8. Has a 10-fold preference for Arg and Lys at position P3'', and exhibits a preference towards 'Lys-48'-linked ubiquitin chains. Deubiquitinates ENAC in apical compartments, thereby regulating apical membrane recycling. Indirectly increases the phosphorylation of IGFIR, AKT and FOXO1 and promotes insulin-signaling and insulin-induced adipogenesis. Required for stress-response retinal, skeletal muscle and germ cell maintenance. May be involved in working memory. Can hydrolyze UBB(+1), a mutated form of ubiquitin which is not effectively degraded by the proteasome. The sequence is that of Ubiquitin carboxyl-terminal hydrolase isozyme L3 (Uchl3) from Mus musculus (Mouse).